The chain runs to 219 residues: MSSLLRKMASKKQRATEILLILKKLYPGATCSLDYQTPVQLLVATILSAQCTDERVNKVTPALFQRYPDANALAYGDRQEIEELIHSTGFFRNKAKNIQGACRKIVEEFDGEVPQRMEELLTLPGVARKTANVVLAHAFGILAGVTVDTHVKRLSQRLGLTKATDPIRIERDLMKLIPQPDWENFSIHIIYHGRAVCAARKPLCGECQLAHLCPSAQAS.

The HhH domain occupies Met117–Ala136. Cys197, Cys204, Cys207, and Cys213 together coordinate [4Fe-4S] cluster.

It belongs to the Nth/MutY family. Requires [4Fe-4S] cluster as cofactor.

The enzyme catalyses 2'-deoxyribonucleotide-(2'-deoxyribose 5'-phosphate)-2'-deoxyribonucleotide-DNA = a 3'-end 2'-deoxyribonucleotide-(2,3-dehydro-2,3-deoxyribose 5'-phosphate)-DNA + a 5'-end 5'-phospho-2'-deoxyribonucleoside-DNA + H(+). Functionally, DNA repair enzyme that has both DNA N-glycosylase activity and AP-lyase activity. The DNA N-glycosylase activity releases various damaged pyrimidines from DNA by cleaving the N-glycosidic bond, leaving an AP (apurinic/apyrimidinic) site. The AP-lyase activity cleaves the phosphodiester bond 3' to the AP site by a beta-elimination, leaving a 3'-terminal unsaturated sugar and a product with a terminal 5'-phosphate. The protein is Endonuclease III of Synechocystis sp. (strain ATCC 27184 / PCC 6803 / Kazusa).